The chain runs to 313 residues: MMENFKHTTVLLDEAVNGLNIRPDGIYIDGTFGRGGHSRLILSQLGEEGRLLAIDRDPQAIAVAQTINDPRFSIIHGPFSALADYVAERELTGKIDGILLDLGVSSPQLDDAERGFSFMRDGPLDMRMDPTRGQSAAEWLQTAEEADIAWVLKTFGEERFAKRIARAIVERNREQPMTRTKELAEVVAAATPVKDKFKHPATRTFQAVRIWVNSELEEIEQALKSSLSVLAPGGRLSIISFHSLEDRIVKRFMREQSRGPQVPAGLPMTEAQLKKLGGRELRALGKLMPGEKEVAENPRARSSVLRIAERTNA.

S-adenosyl-L-methionine is bound by residues Gly-35–His-37, Asp-55, Phe-79, Asp-101, and Gln-108.

It belongs to the methyltransferase superfamily. RsmH family.

The protein resides in the cytoplasm. It carries out the reaction cytidine(1402) in 16S rRNA + S-adenosyl-L-methionine = N(4)-methylcytidine(1402) in 16S rRNA + S-adenosyl-L-homocysteine + H(+). Specifically methylates the N4 position of cytidine in position 1402 (C1402) of 16S rRNA. This chain is Ribosomal RNA small subunit methyltransferase H, found in Salmonella agona (strain SL483).